Consider the following 196-residue polypeptide: Mpv17-like protein (196 aa).

The Cytoplasmic segment spans residues 1–16 (MAGWWPALSRAARRHP). The tract at residues 16–55 (PWPTNVLLYGSLVSAGDALQQRLQGREANWRQTRRVATLV) is targeting to peroxisomes. A helical transmembrane segment spans residues 17-34 (WPTNVLLYGSLVSAGDAL). Over 35–50 (QQRLQGREANWRQTRR) the chain is Lumenal. A helical transmembrane segment spans residues 51-67 (VATLVVTFHANFNYVWL). Residues 68–90 (RLLERALPGRAPHALLAKLLCDQ) are Cytoplasmic-facing. Residues 91–108 (VVGAPIAVSAFYVGMSIL) form a helical membrane-spanning segment. Over 109-150 (QGKDDIFLDLKQKFWNTYLSGLMYWPFVQLTNFSLVPVQWRT) the chain is Lumenal. A helical transmembrane segment spans residues 151–167 (AYAGVCGFLWATFICFS). Residues 168 to 196 (QQSGDGTFKSAFTILYTKGTSATEGYPKK) lie on the Cytoplasmic side of the membrane.

It belongs to the peroxisomal membrane protein PXMP2/4 family. Isoform 1 is detected in the kidney (at protein level). Isoform 1 and isoform 2 are expressed in the kidney, heart, liver, lung, pancreas and skeletal muscle.

The protein localises to the peroxisome membrane. Participates in reactive oxygen species metabolism by up- or down-regulation of the genes of antioxidant enzymes. Protective against the mitochondrial apoptotic cascade. This is Mpv17-like protein (MPV17L) from Homo sapiens (Human).